Here is a 145-residue protein sequence, read N- to C-terminus: Ribosomal RNA large subunit methyltransferase H (145 aa).

Residues L62, G94, and 113 to 118 (LGQLTL) contribute to the S-adenosyl-L-methionine site.

The protein belongs to the RNA methyltransferase RlmH family. Homodimer.

It is found in the cytoplasm. The catalysed reaction is pseudouridine(1915) in 23S rRNA + S-adenosyl-L-methionine = N(3)-methylpseudouridine(1915) in 23S rRNA + S-adenosyl-L-homocysteine + H(+). In terms of biological role, specifically methylates the pseudouridine at position 1915 (m3Psi1915) in 23S rRNA. This chain is Ribosomal RNA large subunit methyltransferase H, found in Deinococcus deserti (strain DSM 17065 / CIP 109153 / LMG 22923 / VCD115).